The sequence spans 201 residues: Recombination protein RecR (201 aa).

The C4-type zinc finger occupies 60-75 (CSCCGNVDTIDPCTVC). One can recognise a Toprim domain in the interval 83-178 (SMIIVVEDVS…KTTRLAHGVP (96 aa)).

The protein belongs to the RecR family.

In terms of biological role, may play a role in DNA repair. It seems to be involved in an RecBC-independent recombinational process of DNA repair. It may act with RecF and RecO. This is Recombination protein RecR from Allorhizobium ampelinum (strain ATCC BAA-846 / DSM 112012 / S4) (Agrobacterium vitis (strain S4)).